Here is a 597-residue protein sequence, read N- to C-terminus: uncharacterized protein (597 aa).

In terms of domain architecture, Helicase ATP-binding spans 48 to 198 (LHPYNPYSSL…DSILSLTKET (151 aa)). Residue 61 to 68 (YDVGLGKT) coordinates ATP. Positions 146 to 149 (DEVH) match the DEVH box motif. The 193-residue stretch at 275 to 467 (KINAFINSIK…DIPKIDNEMV (193 aa)) folds into the Helicase C-terminal domain.

Belongs to the helicase family.

Functionally, the presence of the two linear plasmids, termed pGKL1 and pGKL2, in strains of Kluyveromyces lactis confers the killer phenotype to the host cell, by promoting the secretion of a toxin able to inhibit the growth of sensitive strains. This is an uncharacterized protein from Kluyveromyces lactis (strain ATCC 8585 / CBS 2359 / DSM 70799 / NBRC 1267 / NRRL Y-1140 / WM37) (Yeast).